A 287-amino-acid chain; its full sequence is Polyamine aminopropyltransferase (287 aa).

The region spanning 5–238 (ETWHETLHDH…GIMTFAWASQ (234 aa)) is the PABS domain. Glutamine 33 serves as a coordination point for S-methyl-5'-thioadenosine. Residues histidine 64 and aspartate 88 each coordinate spermidine. Residues glutamate 108 and 140 to 141 (DG) each bind S-methyl-5'-thioadenosine. Aspartate 158 serves as the catalytic Proton acceptor. Spermidine is bound at residue 158 to 161 (DCTD). Proline 165 is an S-methyl-5'-thioadenosine binding site.

It belongs to the spermidine/spermine synthase family. In terms of assembly, homodimer or homotetramer.

Its subcellular location is the cytoplasm. It carries out the reaction S-adenosyl 3-(methylsulfanyl)propylamine + putrescine = S-methyl-5'-thioadenosine + spermidine + H(+). It functions in the pathway amine and polyamine biosynthesis; spermidine biosynthesis; spermidine from putrescine: step 1/1. Functionally, catalyzes the irreversible transfer of a propylamine group from the amino donor S-adenosylmethioninamine (decarboxy-AdoMet) to putrescine (1,4-diaminobutane) to yield spermidine. This is Polyamine aminopropyltransferase from Sodalis glossinidius (strain morsitans).